The chain runs to 558 residues: Magnesium-chelatase 60 kDa subunit (558 aa).

Disordered stretches follow at residues 234 to 268 (MPAS…GEEM) and 298 to 325 (MARG…MGRL). Acidic residues predominate over residues 240–254 (APPEPEPEPPEDQPD). Positions 298-308 (MARGATGTGSA) are enriched in low complexity. Positions 376–555 (VLIFAVDASG…HKLSNVLGAA (180 aa)) constitute a VWFA domain.

Belongs to the Mg-chelatase subunits D/I family.

It carries out the reaction protoporphyrin IX + Mg(2+) + ATP + H2O = Mg-protoporphyrin IX + ADP + phosphate + 3 H(+). It functions in the pathway porphyrin-containing compound metabolism; bacteriochlorophyll biosynthesis. Involved in bacteriochlorophyll biosynthesis; introduces a magnesium ion into protoporphyrin IX to yield Mg-protoporphyrin IX. This is Magnesium-chelatase 60 kDa subunit (bchD) from Cereibacter sphaeroides (strain ATCC 17023 / DSM 158 / JCM 6121 / CCUG 31486 / LMG 2827 / NBRC 12203 / NCIMB 8253 / ATH 2.4.1.) (Rhodobacter sphaeroides).